Reading from the N-terminus, the 203-residue chain is Proteasome subunit beta 2 (203 aa).

Residues 1–9 (MGEEVQIGA) constitute a propeptide, removed in mature form; by autocatalysis. Residue Thr10 is the Nucleophile of the active site.

The protein belongs to the peptidase T1B family. In terms of assembly, the 20S proteasome core is composed of 14 alpha and 14 beta subunits that assemble into four stacked heptameric rings, resulting in a barrel-shaped structure. The two inner rings, each composed of seven catalytic beta subunits, are sandwiched by two outer rings, each composed of seven alpha subunits. The catalytic chamber with the active sites is on the inside of the barrel. Has a gated structure, the ends of the cylinder being occluded by the N-termini of the alpha-subunits. Is capped at one or both ends by the proteasome regulatory ATPase, PAN.

It is found in the cytoplasm. It carries out the reaction Cleavage of peptide bonds with very broad specificity.. With respect to regulation, the formation of the proteasomal ATPase PAN-20S proteasome complex, via the docking of the C-termini of PAN into the intersubunit pockets in the alpha-rings, triggers opening of the gate for substrate entry. Interconversion between the open-gate and close-gate conformations leads to a dynamic regulation of the 20S proteasome proteolysis activity. Component of the proteasome core, a large protease complex with broad specificity involved in protein degradation. The sequence is that of Proteasome subunit beta 2 from Pyrobaculum arsenaticum (strain DSM 13514 / JCM 11321 / PZ6).